Reading from the N-terminus, the 206-residue chain is Imidazole glycerol phosphate synthase subunit HisH (206 aa).

The 202-residue stretch at 5 to 206 folds into the Glutamine amidotransferase type-1 domain; the sequence is SVVVLDYGSG…AVLRNWIERL (202 aa). Cysteine 83 (nucleophile) is an active-site residue. Residues histidine 187 and glutamate 189 contribute to the active site.

As to quaternary structure, heterodimer of HisH and HisF.

It is found in the cytoplasm. It catalyses the reaction 5-[(5-phospho-1-deoxy-D-ribulos-1-ylimino)methylamino]-1-(5-phospho-beta-D-ribosyl)imidazole-4-carboxamide + L-glutamine = D-erythro-1-(imidazol-4-yl)glycerol 3-phosphate + 5-amino-1-(5-phospho-beta-D-ribosyl)imidazole-4-carboxamide + L-glutamate + H(+). It carries out the reaction L-glutamine + H2O = L-glutamate + NH4(+). It participates in amino-acid biosynthesis; L-histidine biosynthesis; L-histidine from 5-phospho-alpha-D-ribose 1-diphosphate: step 5/9. IGPS catalyzes the conversion of PRFAR and glutamine to IGP, AICAR and glutamate. The HisH subunit catalyzes the hydrolysis of glutamine to glutamate and ammonia as part of the synthesis of IGP and AICAR. The resulting ammonia molecule is channeled to the active site of HisF. This Mycolicibacterium paratuberculosis (strain ATCC BAA-968 / K-10) (Mycobacterium paratuberculosis) protein is Imidazole glycerol phosphate synthase subunit HisH.